Here is a 246-residue protein sequence, read N- to C-terminus: UDP-N-acetyl-D-mannosaminuronic acid transferase (246 aa).

Belongs to the glycosyltransferase 26 family.

The enzyme catalyses UDP-N-acetyl-alpha-D-mannosaminouronate + N-acetyl-alpha-D-glucosaminyl-di-trans,octa-cis-undecaprenyl diphosphate = beta-D-ManNAcA-(1-&gt;4)-alpha-D-GlcNAc-di-trans,octa-cis-undecaprenyl diphosphate + UDP + H(+). The protein operates within bacterial outer membrane biogenesis; enterobacterial common antigen biosynthesis. Its function is as follows. Catalyzes the synthesis of Und-PP-GlcNAc-ManNAcA (Lipid II), the second lipid-linked intermediate involved in enterobacterial common antigen (ECA) synthesis. This chain is UDP-N-acetyl-D-mannosaminuronic acid transferase, found in Escherichia coli O1:K1 / APEC.